We begin with the raw amino-acid sequence, 237 residues long: MATPHINAEMGDFADVVLMPGDPLRAKHIAETFLQDVRQVNNVRGMLGFTGTYKGRKISVMGHGMGIPSCSIYAKELITDFGVKKIIRVGSCGAVSMDVKLRDVVIGMGACTDSKVNRLRFKDNDFAAIADFDMVRNAADAAKAKGIDARVGNLFSADLFYSPDPTMFDVMEKYGILGVEMEAAGIYGVAAEFGVKALTICTVSDHIRTHEQTTAAERQTTFNDMIEIALESVLLGD.

A purine D-ribonucleoside is bound at residue H5. Residues G21, R25, R44, and 88–91 (RVGS) each bind phosphate. A purine D-ribonucleoside contacts are provided by residues 180-182 (EME) and 204-205 (SD). The active-site Proton donor is D205.

This sequence belongs to the PNP/UDP phosphorylase family. As to quaternary structure, homohexamer; trimer of homodimers.

The enzyme catalyses a purine D-ribonucleoside + phosphate = a purine nucleobase + alpha-D-ribose 1-phosphate. It catalyses the reaction a purine 2'-deoxy-D-ribonucleoside + phosphate = a purine nucleobase + 2-deoxy-alpha-D-ribose 1-phosphate. Its function is as follows. Catalyzes the reversible phosphorolytic breakdown of the N-glycosidic bond in the beta-(deoxy)ribonucleoside molecules, with the formation of the corresponding free purine bases and pentose-1-phosphate. This is Purine nucleoside phosphorylase DeoD-type from Edwardsiella ictaluri (strain 93-146).